Consider the following 437-residue polypeptide: ATP-dependent protease ATPase subunit HslU (437 aa).

ATP is bound by residues V18, 60 to 65, D249, E315, and R387; that span reads GVGKTE.

The protein belongs to the ClpX chaperone family. HslU subfamily. As to quaternary structure, a double ring-shaped homohexamer of HslV is capped on each side by a ring-shaped HslU homohexamer. The assembly of the HslU/HslV complex is dependent on binding of ATP.

It localises to the cytoplasm. Its function is as follows. ATPase subunit of a proteasome-like degradation complex; this subunit has chaperone activity. The binding of ATP and its subsequent hydrolysis by HslU are essential for unfolding of protein substrates subsequently hydrolyzed by HslV. HslU recognizes the N-terminal part of its protein substrates and unfolds these before they are guided to HslV for hydrolysis. In Rhodospirillum centenum (strain ATCC 51521 / SW), this protein is ATP-dependent protease ATPase subunit HslU.